Consider the following 362-residue polypeptide: 3-dehydroquinate synthase (362 aa).

Residues 71-76 (DGEQYK), 105-109 (GVIGD), 129-130 (TT), lysine 142, and lysine 151 contribute to the NAD(+) site. Zn(2+)-binding residues include glutamate 184, histidine 247, and histidine 264.

Belongs to the sugar phosphate cyclases superfamily. Dehydroquinate synthase family. Requires NAD(+) as cofactor. The cofactor is Co(2+). Zn(2+) is required as a cofactor.

The protein resides in the cytoplasm. The catalysed reaction is 7-phospho-2-dehydro-3-deoxy-D-arabino-heptonate = 3-dehydroquinate + phosphate. Its pathway is metabolic intermediate biosynthesis; chorismate biosynthesis; chorismate from D-erythrose 4-phosphate and phosphoenolpyruvate: step 2/7. Its function is as follows. Catalyzes the conversion of 3-deoxy-D-arabino-heptulosonate 7-phosphate (DAHP) to dehydroquinate (DHQ). This is 3-dehydroquinate synthase from Haemophilus ducreyi (strain 35000HP / ATCC 700724).